Here is a 520-residue protein sequence, read N- to C-terminus: Sodium-dependent dicarboxylate transporter SdcS (520 aa).

14 consecutive transmembrane segments (helical) span residues A30–F50, L55–T75, A77–L97, S104–M124, S160–I180, I207–I227, F242–L262, K298–L318, V323–I343, E362–S382, G399–V419, M428–M448, A452–F472, and L491–I511.

This sequence belongs to the SLC13A/DASS transporter (TC 2.A.47) family. NADC subfamily.

It is found in the cell membrane. In terms of biological role, mediates the transport of the dicarboxylates fumarate, malate, and succinate across the cytoplasmic membrane via a Na(+)-electrochemical gradient. The chain is Sodium-dependent dicarboxylate transporter SdcS (sdcS) from Staphylococcus aureus (strain USA300).